A 266-amino-acid chain; its full sequence is Protein PAE0875 (266 aa).

Belongs to the CinA family.

In Pyrobaculum aerophilum (strain ATCC 51768 / DSM 7523 / JCM 9630 / CIP 104966 / NBRC 100827 / IM2), this protein is Protein PAE0875.